The primary structure comprises 322 residues: Lipoyl synthase (322 aa).

The tract at residues 1 to 24 (MVTVLDTVSKPRPRHPEKAHRPDQ) is disordered. Basic and acidic residues predominate over residues 14 to 24 (RHPEKAHRPDQ). [4Fe-4S] cluster contacts are provided by Cys-59, Cys-64, Cys-70, Cys-85, Cys-89, Cys-92, and Ser-298. A Radical SAM core domain is found at 71–287 (WDKKHATFMI…ETIAYTKGFL (217 aa)).

It belongs to the radical SAM superfamily. Lipoyl synthase family. [4Fe-4S] cluster is required as a cofactor.

It localises to the cytoplasm. The enzyme catalyses [[Fe-S] cluster scaffold protein carrying a second [4Fe-4S](2+) cluster] + N(6)-octanoyl-L-lysyl-[protein] + 2 oxidized [2Fe-2S]-[ferredoxin] + 2 S-adenosyl-L-methionine + 4 H(+) = [[Fe-S] cluster scaffold protein] + N(6)-[(R)-dihydrolipoyl]-L-lysyl-[protein] + 4 Fe(3+) + 2 hydrogen sulfide + 2 5'-deoxyadenosine + 2 L-methionine + 2 reduced [2Fe-2S]-[ferredoxin]. It functions in the pathway protein modification; protein lipoylation via endogenous pathway; protein N(6)-(lipoyl)lysine from octanoyl-[acyl-carrier-protein]: step 2/2. Functionally, catalyzes the radical-mediated insertion of two sulfur atoms into the C-6 and C-8 positions of the octanoyl moiety bound to the lipoyl domains of lipoate-dependent enzymes, thereby converting the octanoylated domains into lipoylated derivatives. In Chelativorans sp. (strain BNC1), this protein is Lipoyl synthase.